We begin with the raw amino-acid sequence, 502 residues long: Arabinose import ATP-binding protein AraG (502 aa).

ABC transporter domains follow at residues 5–240 (LEFS…MVGR) and 253–496 (LGGI…LPDK). 37–44 (GENGAGKS) contacts ATP.

Belongs to the ABC transporter superfamily. Arabinose importer (TC 3.A.1.2.2) family. The complex is composed of two ATP-binding proteins (AraG), two transmembrane proteins (AraH) and a solute-binding protein (AraF).

It is found in the cell inner membrane. It carries out the reaction L-arabinose(out) + ATP + H2O = L-arabinose(in) + ADP + phosphate + H(+). Functionally, part of the ABC transporter complex AraFGH involved in arabinose import. Responsible for energy coupling to the transport system. This is Arabinose import ATP-binding protein AraG from Rhizobium johnstonii (strain DSM 114642 / LMG 32736 / 3841) (Rhizobium leguminosarum bv. viciae).